The following is a 358-amino-acid chain: 3-isopropylmalate dehydrogenase (358 aa).

77–90 serves as a coordination point for NAD(+); that stretch reads GPKWTHLPPDQQPE. Substrate is bound by residues Arg98, Arg108, Arg137, and Asp226. 3 residues coordinate Mg(2+): Asp226, Asp250, and Asp254. 284–296 serves as a coordination point for NAD(+); that stretch reads GSAPDIAGKGIAN.

Belongs to the isocitrate and isopropylmalate dehydrogenases family. LeuB type 1 subfamily. As to quaternary structure, homodimer. Mg(2+) is required as a cofactor. Requires Mn(2+) as cofactor.

It is found in the cytoplasm. The catalysed reaction is (2R,3S)-3-isopropylmalate + NAD(+) = 4-methyl-2-oxopentanoate + CO2 + NADH. It functions in the pathway amino-acid biosynthesis; L-leucine biosynthesis; L-leucine from 3-methyl-2-oxobutanoate: step 3/4. In terms of biological role, catalyzes the oxidation of 3-carboxy-2-hydroxy-4-methylpentanoate (3-isopropylmalate) to 3-carboxy-4-methyl-2-oxopentanoate. The product decarboxylates to 4-methyl-2 oxopentanoate. This is 3-isopropylmalate dehydrogenase from Mannheimia succiniciproducens (strain KCTC 0769BP / MBEL55E).